The sequence spans 333 residues: MQISVNEFLTPRHIDVQEVSPTRAKITLEPLERGFGHTLGNALRRILLSSMPGCAVVEAEIDGVLHEYSAIEGVQEDVIEILLNLKGLAIKLHGRDEVTLTLAKKGPGVVTAADIQLDHDVEIVNGDHVIANLAANGSLNMKLTVARGRGYEPADARQSDEDESRSIGRLQLDASFSPVRRVAYVVENARVEQRTNLDKLVIDLETNGTLDPEEAIRRAATILQQQLAAFVDLKGDSEPVVVEQEDEIDPILLRPVDDLELTVRSANCLKAENIYYIGDLIQRTEVELLKTPNLGKKSLTEIKDVLASRGLSLGMRLDNWPPASLKKDDKATA.

An alpha N-terminal domain (alpha-NTD) region spans residues 1 to 234 (MQISVNEFLT…QQLAAFVDLK (234 aa)). An alpha C-terminal domain (alpha-CTD) region spans residues 248–333 (IDPILLRPVD…SLKKDDKATA (86 aa)).

The protein belongs to the RNA polymerase alpha chain family. As to quaternary structure, homodimer. The RNAP catalytic core consists of 2 alpha, 1 beta, 1 beta' and 1 omega subunit. When a sigma factor is associated with the core the holoenzyme is formed, which can initiate transcription.

It catalyses the reaction RNA(n) + a ribonucleoside 5'-triphosphate = RNA(n+1) + diphosphate. DNA-dependent RNA polymerase catalyzes the transcription of DNA into RNA using the four ribonucleoside triphosphates as substrates. In Ectopseudomonas mendocina (strain ymp) (Pseudomonas mendocina), this protein is DNA-directed RNA polymerase subunit alpha.